The primary structure comprises 44 residues: Putative keratin-associated protein 20-4 (44 aa).

The protein belongs to the KRTAP type 20 family. Interacts with hair keratins.

Its function is as follows. In the hair cortex, hair keratin intermediate filaments are embedded in an interfilamentous matrix, consisting of hair keratin-associated proteins (KRTAP), which are essential for the formation of a rigid and resistant hair shaft through their extensive disulfide bond cross-linking with abundant cysteine residues of hair keratins. The matrix proteins include the high-sulfur and high-glycine-tyrosine keratins. In Homo sapiens (Human), this protein is Putative keratin-associated protein 20-4 (KRTAP20-4).